Consider the following 505-residue polypeptide: Deoxyguanosinetriphosphate triphosphohydrolase (505 aa).

An HD domain is found at 66-273; the sequence is RLTHSMEVQQ…MEAADDISYC (208 aa).

The protein belongs to the dGTPase family. Type 1 subfamily. Homotetramer. The cofactor is Mg(2+).

It catalyses the reaction dGTP + H2O = 2'-deoxyguanosine + triphosphate + H(+). Functionally, dGTPase preferentially hydrolyzes dGTP over the other canonical NTPs. The protein is Deoxyguanosinetriphosphate triphosphohydrolase of Escherichia coli O7:K1 (strain IAI39 / ExPEC).